The sequence spans 74 residues: MKWVQKAIKRPGRVHRYLMRLYGKRAFTKDGDIKASYLDKAIKHVKKAKIPKEKKRSLLSALLLAKRLKRMHRK.

It is found in the virion. Functionally, this extremely basic protein may tightly bind to SSV1 DNA. Essential for virus function. The sequence is that of Capsid protein VP2 (VP2) from Saccharolobus solfataricus (Sulfolobus solfataricus).